A 207-amino-acid chain; its full sequence is Large ribosomal subunit protein uL4 (207 aa).

Belongs to the universal ribosomal protein uL4 family. In terms of assembly, part of the 50S ribosomal subunit.

In terms of biological role, one of the primary rRNA binding proteins, this protein initially binds near the 5'-end of the 23S rRNA. It is important during the early stages of 50S assembly. It makes multiple contacts with different domains of the 23S rRNA in the assembled 50S subunit and ribosome. Functionally, forms part of the polypeptide exit tunnel. The chain is Large ribosomal subunit protein uL4 from Geobacter metallireducens (strain ATCC 53774 / DSM 7210 / GS-15).